Consider the following 1495-residue polypeptide: Ras GTPase-activating-like protein IQG1 (1495 aa).

The Calponin-homology (CH) domain occupies 108 to 221; it reads LCRVSEVKIW…ILISMINKKW (114 aa). At Thr264 the chain carries Phosphothreonine. Phosphoserine is present on Ser268. The residue at position 299 (Thr299) is a Phosphothreonine. IQ domains follow at residues 447–467, 538–567, 568–597, 599–628, 629–658, 687–716, and 717–746; these read EQDI…VLSS, SHYP…KLND, ERES…AVHD, HKEN…SLGK, ENCN…PENN, EYNN…FYKR, and NVRS…CPNP. The stretch at 759-798 forms a coiled coil; it reads NGTATIEEVQNQLESCQASLDSENMKKERLLKSIRQQLNI. One can recognise a Ras-GAP domain in the interval 876–1100; the sequence is SYFTRFVCEM…PHIKDVLYNV (225 aa).

In terms of assembly, interacts with AFR1. Interacts with AKR1. Interacts with activated CDC42. Interacts with calmodulin CMD1. Interacts with myosin MYO1 and its light chain MLC1. Interacts with BUD4. Interacts with INN1. Interacts with SEC3. Interacts with TEM1.

It is found in the bud neck. In terms of biological role, required for the assembly and the contraction of the actomyosin ring at the bud neck during cytokinesis. Seems to be involved in additional tasks during cell division like axial bud-site selection and targeted secretion by recruiting the spatial landmark BUD4, the septin CDC12 and the secretion landmark SEC3 to the bud neck. May be regulated by calcium ions. In Saccharomyces cerevisiae (strain ATCC 204508 / S288c) (Baker's yeast), this protein is Ras GTPase-activating-like protein IQG1 (IQG1).